The primary structure comprises 465 residues: UDP-N-acetylmuramate--L-alanine ligase (465 aa).

ATP is bound at residue 112–118 (GTHGKTT).

It belongs to the MurCDEF family.

The protein resides in the cytoplasm. It carries out the reaction UDP-N-acetyl-alpha-D-muramate + L-alanine + ATP = UDP-N-acetyl-alpha-D-muramoyl-L-alanine + ADP + phosphate + H(+). The protein operates within cell wall biogenesis; peptidoglycan biosynthesis. In terms of biological role, cell wall formation. The chain is UDP-N-acetylmuramate--L-alanine ligase from Janthinobacterium sp. (strain Marseille) (Minibacterium massiliensis).